A 642-amino-acid chain; its full sequence is Frizzled-1 (642 aa).

An N-terminal signal peptide occupies residues 1–68 (MAEEAAPSES…WLLEAPLLLG (68 aa)). 2 disordered regions span residues 26–45 (PGRREEVGHEDTASHRRPRA) and 76–99 (QVSGPGQQAPPPPQPQQSGQQYNG). The Extracellular portion of the chain corresponds to 69 to 317 (VRAQAAGQVS…PEELRFSRTW (249 aa)). The 120-residue stretch at 106 to 225 (PDHGYCQPIS…HGAGELCVGQ (120 aa)) folds into the FZ domain. 5 disulfides stabilise this stretch: C111–C172, C119–C165, C156–C193, C182–C222, and C186–C210. A glycan (N-linked (GlcNAc...) asparagine) is linked at N125. Residue N226 is glycosylated (N-linked (GlcNAc...) asparagine). Residues 318 to 338 (IGIWSVLCCASTLFTVLTYLV) form a helical membrane-spanning segment. The Cytoplasmic portion of the chain corresponds to 339–349 (DMRRFSYPERP). The helical transmembrane segment at 350 to 370 (IIFLSGCYTAVAVAYIAGFLL) threads the bilayer. The Extracellular portion of the chain corresponds to 371–397 (EDRVVCNDKFAEDGARTVAQGTKKEGC). The helical transmembrane segment at 398 to 418 (TILFMMLYFFSMASSIWWVIL) threads the bilayer. Residues 419-440 (SLTWFLAAGMKWGHEAIEANSQ) are Cytoplasmic-facing. A helical transmembrane segment spans residues 441–461 (YFHLAAWAVPAIKTITILALG). Topologically, residues 462–484 (QVDGDVLSGVCFVGLNNVDALRG) are extracellular. Residues 485–505 (FVLAPLFVYLFIGTSFLLAGF) traverse the membrane as a helical segment. The Cytoplasmic portion of the chain corresponds to 506-531 (VSLFRIRTIMKHDGTKTEKLEKLMVR). The chain crosses the membrane as a helical span at residues 532 to 552 (IGVFSVLYTVPATIVIACYFY). The Extracellular segment spans residues 553-593 (EQAFRDQWERSWVAQSCKSYAIPCPHLQGGGGVPPHPPMSP). The helical transmembrane segment at 594–614 (DFTVFMIKYLMTLIVGITSGF) threads the bilayer. At 615-642 (WIWSGKTLNSWRKFYTRLTNSKQGETTV) the chain is on the cytoplasmic side. Positions 620–625 (KTLNSW) match the Lys-Thr-X-X-X-Trp motif, mediates interaction with the PDZ domain of Dvl family members motif. Residues 640 to 642 (TTV) carry the PDZ-binding motif.

The protein belongs to the G-protein coupled receptor Fz/Smo family. As to quaternary structure, interacts with MYOC. Interacts with WNT7B. Ubiquitinated by ZNRF3, leading to its degradation by the proteasome. Expressed in chondrocytes.

It localises to the cell membrane. Functionally, receptor for Wnt proteins. Activated by WNT7B. Activated by WNT3A, WNT3, WNT1 and to a lesser extent WNT2, but apparently not by WNT4, WNT5A, WNT5B, WNT6, WNT7A or WNT7B. Contradictory results showing activation by WNT7B have been described for mouse. Functions in the canonical Wnt/beta-catenin signaling pathway. The canonical Wnt/beta-catenin signaling pathway leads to the activation of disheveled proteins, inhibition of GSK-3 kinase, nuclear accumulation of beta-catenin and activation of Wnt target genes. A second signaling pathway involving PKC and calcium fluxes has been seen for some family members, but it is not yet clear if it represents a distinct pathway or if it can be integrated in the canonical pathway, as PKC seems to be required for Wnt-mediated inactivation of GSK-3 kinase. Both pathways seem to involve interactions with G-proteins. May be involved in transduction and intercellular transmission of polarity information during tissue morphogenesis and/or in differentiated tissues. In Mus musculus (Mouse), this protein is Frizzled-1 (Fzd1).